The chain runs to 313 residues: Protein KRE1 (313 aa).

The N-terminal stretch at Met-1–Ala-26 is a signal peptide. Copy 1 of the repeat occupies Thr-72–Thr-86. The 2 X approximate repeats stretch occupies residues Thr-72 to Thr-141. The disordered stretch occupies residues Pro-94–Thr-114. Residues Thr-127 to Thr-141 form repeat 2. Positions Thr-147 to Ala-181 are enriched in low complexity. The tract at residues Thr-147–Val-198 is disordered. Asn-288 carries the GPI-anchor amidated asparagine lipid modification. A propeptide spans Glu-289–Leu-313 (removed in mature form).

It belongs to the KRE1 family. Extensively modified; probably through addition of O-linked mannose residues. Post-translationally, the GPI-anchor is attached to the protein in the endoplasmic reticulum and serves to target the protein to the cell surface. There, the glucosamine-inositol phospholipid moiety is cleaved off and the GPI-modified mannoprotein is covalently attached via its lipidless GPI glycan remnant to the 1,6-beta-glucan of the outer cell wall layer.

It localises to the cell membrane. The protein localises to the secreted. It is found in the cell wall. Functionally, involved in a late stage of cell wall 1,6-beta-glucan synthesis and assembly. Has a structural, rather than enzymic, function within cell wall 1,6-beta-glucan assembly and architecture, possibly by being involved in covalently cross-linking 1,6-beta-glucans to other cell wall components such as 1,3-beta-glucan, chitin and certain mannoproteins. Acts as the plasma membrane receptor for the yeast K1 viral toxin. This Saccharomyces cerevisiae (strain ATCC 204508 / S288c) (Baker's yeast) protein is Protein KRE1 (KRE1).